We begin with the raw amino-acid sequence, 248 residues long: Probable phosphatase VF_A0065 (248 aa).

The Zn(2+) site is built by His8, His10, His16, His41, Glu74, His102, His132, Asp194, and His196.

The protein belongs to the PHP family. Requires Zn(2+) as cofactor.

The polypeptide is Probable phosphatase VF_A0065 (Aliivibrio fischeri (strain ATCC 700601 / ES114) (Vibrio fischeri)).